We begin with the raw amino-acid sequence, 974 residues long: ATP-dependent RNA helicase glh-2 (974 aa).

Residues 212–435 (HESGFGGGKS…SGFGGGNDGG (224 aa)) are disordered. Over residues 215 to 250 (GFGGGKSGGFGGGNSGGSGFGSGGNSNGFGSGGGGQ) the composition is skewed to gly residues. Polar residues predominate over residues 256-267 (NNNCFNCQQPGH). CCHC-type zinc fingers lie at residues 257–274 (NNCF…DCPE) and 282–299 (RVCY…DCPE). Composition is skewed to basic and acidic residues over residues 268-282 (RSND…REPR) and 293-307 (NSRD…REGR). Positions 309–364 (GFTGGSSGFGGGNGGGTGFDSGLTNGFGSGNNGESGFGSGGFGGNSNGFGSGGGGQ) are enriched in gly residues. The segment covering 370–381 (NNNCFNCQQPGH) has biased composition (polar residues). CCHC-type zinc fingers lie at residues 371–388 (NNCF…DCPE) and 396–413 (RVCY…DCPE). Basic and acidic residues-rich tracts occupy residues 382–396 (RSND…REPR) and 407–421 (NSRD…REGR). Positions 426 to 435 (SGFGGGNDGG) are enriched in gly residues. CCHC-type zinc fingers lie at residues 453-470 (MKCF…ECPE) and 473-490 (RGCF…ECPN). The Q motif signature appears at 552-580 (KTFSEANLGETMKKNVAHAGYTKTTPIQQ). One can recognise a Helicase ATP-binding domain in the interval 583–767 (LPLIHQGHDI…RNHLKEGYIM (185 aa)). 596–603 (AQTGSGKT) contacts ATP. The short motif at 710–713 (DEAD) is the DEAD box element. A Helicase C-terminal domain is found at 803-950 (DIDSYTTEKN…LVPEWMQGAS (148 aa)).

The protein belongs to the DEAD box helicase family. DDX4/VASA subfamily. As to quaternary structure, interacts (via C-terminus) with kgb-1.

The catalysed reaction is ATP + H2O = ADP + phosphate + H(+). Functionally, probable ATP-binding RNA helicase. This chain is ATP-dependent RNA helicase glh-2 (glh-2), found in Caenorhabditis elegans.